A 287-amino-acid polypeptide reads, in one-letter code: 4-hydroxybenzoate octaprenyltransferase (287 aa).

The next 6 helical transmembrane spans lie at 41-61, 92-112, 133-153, 160-180, 218-238, and 267-287; these read LPLL…GCAI, VALA…LNAL, FFAI…PMAF, VPML…AYDT, LGIY…WLGW, and NNWL…ATWF.

It belongs to the UbiA prenyltransferase family. The cofactor is Mg(2+).

The protein resides in the cell inner membrane. The catalysed reaction is all-trans-octaprenyl diphosphate + 4-hydroxybenzoate = 4-hydroxy-3-(all-trans-octaprenyl)benzoate + diphosphate. The protein operates within cofactor biosynthesis; ubiquinone biosynthesis. In terms of biological role, catalyzes the prenylation of para-hydroxybenzoate (PHB) with an all-trans polyprenyl group. Mediates the second step in the final reaction sequence of ubiquinone-8 (UQ-8) biosynthesis, which is the condensation of the polyisoprenoid side chain with PHB, generating the first membrane-bound Q intermediate 3-octaprenyl-4-hydroxybenzoate. This Paraburkholderia xenovorans (strain LB400) protein is 4-hydroxybenzoate octaprenyltransferase.